Consider the following 428-residue polypeptide: Adenylosuccinate synthetase (428 aa).

GTP contacts are provided by residues 12–18 (GDEGKGK) and 40–42 (GHT). Asp13 serves as the catalytic Proton acceptor. Residues Asp13 and Gly40 each coordinate Mg(2+). Residues 13–16 (DEGK), 38–41 (NAGH), Thr129, Arg143, Gln224, Thr239, and Arg303 each bind IMP. Residue His41 is the Proton donor of the active site. 299–305 (VTTGRIR) is a substrate binding site. Residues Arg305, 331–333 (KVD), and 410–412 (AYG) each bind GTP.

This sequence belongs to the adenylosuccinate synthetase family. As to quaternary structure, homodimer. Requires Mg(2+) as cofactor.

The protein localises to the cytoplasm. It catalyses the reaction IMP + L-aspartate + GTP = N(6)-(1,2-dicarboxyethyl)-AMP + GDP + phosphate + 2 H(+). Its pathway is purine metabolism; AMP biosynthesis via de novo pathway; AMP from IMP: step 1/2. Its function is as follows. Plays an important role in the de novo pathway of purine nucleotide biosynthesis. Catalyzes the first committed step in the biosynthesis of AMP from IMP. This Francisella philomiragia subsp. philomiragia (strain ATCC 25017 / CCUG 19701 / FSC 153 / O#319-036) protein is Adenylosuccinate synthetase.